Here is a 373-residue protein sequence, read N- to C-terminus: Histone-lysine N-methyltransferase SETD7 (373 aa).

The tract at residues 1–20 (MDSDDDNMEEVVEGPLDEDD) is disordered. 3 MORN repeats span residues 36-58 (FEGHFVHGEKNGKGKFFFFDGST), 59-81 (LEGFYVDDALQGQGVYTYEDGGA), and 106-128 (FRGRYKDNIRYGMCWVYYPDGAC). An SET domain is found at 214 to 336 (QRVYVGQSLI…KDEELTVAYG (123 aa)). S-adenosyl-L-methionine is bound by residues 226–228 (AGE), Asn-296, and His-297.

It belongs to the class V-like SAM-binding methyltransferase superfamily. Histone-lysine methyltransferase family. SET7 subfamily.

The protein localises to the nucleus. It localises to the chromosome. It catalyses the reaction L-lysyl(4)-[histone H3] + S-adenosyl-L-methionine = N(6)-methyl-L-lysyl(4)-[histone H3] + S-adenosyl-L-homocysteine + H(+). The enzyme catalyses L-lysyl-[protein] + S-adenosyl-L-methionine = N(6)-methyl-L-lysyl-[protein] + S-adenosyl-L-homocysteine + H(+). Its function is as follows. Histone methyltransferase that specifically monomethylates 'Lys-4' of histone H3. H3 'Lys-4' methylation represents a specific tag for epigenetic transcriptional activation. Plays a central role in the transcriptional activation of genes. Also has methyltransferase activity toward non-histone proteins. The protein is Histone-lysine N-methyltransferase SETD7 (setd7) of Danio rerio (Zebrafish).